Here is a 244-residue protein sequence, read N- to C-terminus: Tegument protein UL51 homolog (244 aa).

A lipid anchor (S-palmitoyl cysteine; by host) is attached at Cys10.

This sequence belongs to the herpesviridae UL51 family. Oligomerizes. Interacts with ORF55; this interaction mediates ORF55 incorporation to virions. In terms of processing, phosphorylated. Post-translationally, palmitoylation is necessary for Golgi localization.

Its subcellular location is the virion tegument. The protein localises to the host cytoplasm. It is found in the host Golgi apparatus. Plays several roles during the time course of infection, including egress of virus particles from the perinuclear space and secondary envelopment of cytoplasmic capsids that bud into specific trans-Golgi network (TGN)-derived membranes. This chain is Tegument protein UL51 homolog (8), found in Equus caballus (Horse).